A 262-amino-acid polypeptide reads, in one-letter code: Short-chain Z-isoprenyl diphosphate synthase (262 aa).

Residue Asp40 is part of the active site. Asp40 provides a ligand contact to Mg(2+). Residues Gly41 to Arg44, Trp45, and Ser86 to Glu88 contribute to the substrate site. Residue Asn89 is the Proton acceptor of the active site. Substrate contacts are provided by residues Arg92, Arg211, and Arg217–Ser219. Glu230 contacts Mg(2+).

The protein belongs to the UPP synthase family. Z-FPP synthase subfamily. Requires Mg(2+) as cofactor.

The catalysed reaction is isopentenyl diphosphate + (2E)-geranyl diphosphate = (2Z,6E)-farnesyl diphosphate + diphosphate. It participates in phospholipid metabolism; decaprenyl phosphate biosynthesis. Generates Z-farnesyl diphosphate (Z-FPP) from isopentenyl pyrophosphate (IPP). Z-FPP is the precursor of decaprenyl diphosphate, which has a central role in the biosynthesis of the mycobacterial cell wall. This chain is Short-chain Z-isoprenyl diphosphate synthase, found in Mycobacterium leprae (strain TN).